Here is a 451-residue protein sequence, read N- to C-terminus: Jacalin-related lectin 35 (451 aa).

Alanine 2 is modified (N-acetylalanine). Jacalin-type lectin domains follow at residues 2-143, 156-297, and 306-448; these read AKKL…YIIP, LTKL…YIIP, and SNTI…NVAP.

The protein belongs to the jacalin lectin family. As to quaternary structure, component of the PYK10 complex, at least composed of PYK10/BGLU23, BGLU21, BGLU22, JAL22, JAL23, PBP1/JAL30, PBP2/JAL31, JAL32, JAL33, JAL34, JAL35, GLL22 and GLL23.

This chain is Jacalin-related lectin 35 (JAL35), found in Arabidopsis thaliana (Mouse-ear cress).